A 574-amino-acid chain; its full sequence is MKSIIFITFFIFFLKKLNGLPNGYGVGLVDPNGQCMNYIGDSIDQPLCKNKLSNNGEFIYSTIGNSLNSQTLSQQTIAKSFEALTFIQNQCQDLLFAEYGICNIYLSPCIITTVAPLKNISLPQRLCNSACQRMVTNCPRLGEKIDCSISFLFPEVGTLYNLSDYGYKANGGLYEVPCFNPTADYDNSSSLNEFIEICPSPLLLKNSSDPKYSKRGYTYLPPTNCVLPCPVPNYTKEKWNQIENLSKVLSTISFVCSIYNILSFGILKKKKTKYTICISALSASVALINLGDIIKIGVGYEKVLCPEPGRFATQVDDPLCGLTAALFHVGICSTVLWTTTMAIYLYSAIKNIKLFKFRYFIIFNTGFSLTSLIIAASASKFEAGTGSIECWIRDRWYSICLFWLPCGICLLIGTICIASVIVEIYKVSKNIKLSESETIMRQIKPIISVILVSGSFTYLFIIFFDIERNFGGYRSAVTDYVLCLLNSTDNGIECHTSGPSYNPYFMFYFFMRFFGILFFLIYGTSKNARDSWYELFIKIKVSLSETSSTISNNSGGGSSQQKQQQQNEIKLEKI.

The signal sequence occupies residues 1-19 (MKSIIFITFFIFFLKKLNG). Over 20-246 (LPNGYGVGLV…EKWNQIENLS (227 aa)) the chain is Extracellular. The FZ domain maps to 30–181 (DPNGQCMNYI…GLYEVPCFNP (152 aa)). 4 disulfides stabilise this stretch: Cys-35/Cys-109, Cys-48/Cys-102, Cys-91/Cys-138, and Cys-127/Cys-178. N-linked (GlcNAc...) asparagine glycosylation is found at Asn-119, Asn-161, Asn-187, Asn-206, Asn-233, and Asn-244. A helical transmembrane segment spans residues 247 to 267 (KVLSTISFVCSIYNILSFGIL). Residues 268 to 273 (KKKKTK) lie on the Cytoplasmic side of the membrane. The helical transmembrane segment at 274-294 (YTICISALSASVALINLGDII) threads the bilayer. Residues 295 to 324 (KIGVGYEKVLCPEPGRFATQVDDPLCGLTA) lie on the Extracellular side of the membrane. Residues 325-345 (ALFHVGICSTVLWTTTMAIYL) traverse the membrane as a helical segment. Topologically, residues 346–358 (YSAIKNIKLFKFR) are cytoplasmic. The helical transmembrane segment at 359 to 379 (YFIIFNTGFSLTSLIIAASAS) threads the bilayer. The Extracellular portion of the chain corresponds to 380–401 (KFEAGTGSIECWIRDRWYSICL). Residues 402–422 (FWLPCGICLLIGTICIASVIV) form a helical membrane-spanning segment. Topologically, residues 423-445 (EIYKVSKNIKLSESETIMRQIKP) are cytoplasmic. The chain crosses the membrane as a helical span at residues 446 to 466 (IISVILVSGSFTYLFIIFFDI). The Extracellular segment spans residues 467–502 (ERNFGGYRSAVTDYVLCLLNSTDNGIECHTSGPSYN). Asn-486 is a glycosylation site (N-linked (GlcNAc...) asparagine). A helical transmembrane segment spans residues 503–523 (PYFMFYFFMRFFGILFFLIYG). At 524–574 (TSKNARDSWYELFIKIKVSLSETSSTISNNSGGGSSQQKQQQQNEIKLEKI) the chain is on the cytoplasmic side. Residues 550-568 (ISNNSGGGSSQQKQQQQNE) are compositionally biased toward low complexity. Positions 550–574 (ISNNSGGGSSQQKQQQQNEIKLEKI) are disordered.

It belongs to the G-protein coupled receptor Fz/Smo family.

It is found in the membrane. The polypeptide is Frizzled and smoothened-like protein G (fslG) (Dictyostelium discoideum (Social amoeba)).